A 950-amino-acid chain; its full sequence is Valine--tRNA ligase (950 aa).

Residues Pro40–His50 carry the 'HIGH' region motif. The 'KMSKS' region motif lies at Lys551–Ser555. Residue Lys554 participates in ATP binding. Residues Leu881 to Leu950 are a coiled coil.

It belongs to the class-I aminoacyl-tRNA synthetase family. ValS type 1 subfamily. As to quaternary structure, monomer.

It localises to the cytoplasm. The enzyme catalyses tRNA(Val) + L-valine + ATP = L-valyl-tRNA(Val) + AMP + diphosphate. Functionally, catalyzes the attachment of valine to tRNA(Val). As ValRS can inadvertently accommodate and process structurally similar amino acids such as threonine, to avoid such errors, it has a 'posttransfer' editing activity that hydrolyzes mischarged Thr-tRNA(Val) in a tRNA-dependent manner. This chain is Valine--tRNA ligase, found in Pseudomonas aeruginosa (strain ATCC 15692 / DSM 22644 / CIP 104116 / JCM 14847 / LMG 12228 / 1C / PRS 101 / PAO1).